The following is a 1390-amino-acid chain: ABC transporter G family member 43 (1390 aa).

Residues 1-22 (MTMPQTDGVEFASRNNLENGDG) form a disordered region. The 275-residue stretch at 137 to 411 (SKLSRFTFSK…FEDCGFKCPQ (275 aa)) folds into the ABC transporter 1 domain. ATP is bound at residue 171–178 (GPPGCGKT). Positions 489 to 701 (DMFKACSRRE…AEIGLTSNEF (213 aa)) constitute an ABC transmembrane type-2 1 domain. Transmembrane regions (helical) follow at residues 507-527 (FVYV…MTVY), 541-561 (YLLG…LPEL), 594-614 (IPIS…VIGY), 626-646 (LILF…GAVF), 651-671 (VATT…GFIV), and 737-757 (FGAL…ALTF). The ABC transporter 2 domain maps to 798 to 1043 (FTFQDVQYFI…VIEYFMSIPG (246 aa)). 835 to 842 (GVSGAGKT) lines the ATP pocket. Residues 1115–1329 (EQFKACLWKQ…VLNGLLTSQY (215 aa)) enclose the ABC transmembrane type-2 2 domain. The next 7 helical transmembrane spans lie at 1134-1154 (YNLT…ILFL), 1173-1193 (MFTV…FCVA), 1218-1238 (VLVE…IVYP), 1253-1273 (FYSI…LVVV), 1279-1299 (IAFT…GYVM), 1307-1327 (WWIW…LLTS), and 1362-1382 (LVAV…AFFI).

The protein belongs to the ABC transporter superfamily. ABCG family. PDR (TC 3.A.1.205) subfamily.

It localises to the membrane. Functionally, may be a general defense protein. This is ABC transporter G family member 43 (ABCG43) from Arabidopsis thaliana (Mouse-ear cress).